The following is a 446-amino-acid chain: Tol-Pal system protein TolB (446 aa).

The N-terminal stretch at 1–24 (MKRAFLSALSVGLAALFLTGPAQA) is a signal peptide.

Belongs to the TolB family. As to quaternary structure, the Tol-Pal system is composed of five core proteins: the inner membrane proteins TolA, TolQ and TolR, the periplasmic protein TolB and the outer membrane protein Pal. They form a network linking the inner and outer membranes and the peptidoglycan layer.

Its subcellular location is the periplasm. In terms of biological role, part of the Tol-Pal system, which plays a role in outer membrane invagination during cell division and is important for maintaining outer membrane integrity. The protein is Tol-Pal system protein TolB of Dinoroseobacter shibae (strain DSM 16493 / NCIMB 14021 / DFL 12).